The sequence spans 1203 residues: DNA-directed RNA polymerase subunit beta (1203 aa).

The span at 1174-1195 shows a compositional bias: basic and acidic residues; that stretch reads AAQEAKAAFEAEEAEKATKAEA. The segment at 1174–1203 is disordered; the sequence is AAQEAKAAFEAEEAEKATKAEATEEAAEQE.

It belongs to the RNA polymerase beta chain family. In terms of assembly, the RNAP catalytic core consists of 2 alpha, 1 beta, 1 beta' and 1 omega subunit. When a sigma factor is associated with the core the holoenzyme is formed, which can initiate transcription.

The enzyme catalyses RNA(n) + a ribonucleoside 5'-triphosphate = RNA(n+1) + diphosphate. Functionally, DNA-dependent RNA polymerase catalyzes the transcription of DNA into RNA using the four ribonucleoside triphosphates as substrates. In Streptococcus pneumoniae (strain JJA), this protein is DNA-directed RNA polymerase subunit beta.